A 557-amino-acid chain; its full sequence is MRTSQYLLSTIKEIPLDAEVISHQLMLRAGIIRQLASGLYTWLPTGLRILRKVENIVREEMNNIGAIEVSMPIVQPANLWLESGRWGQYGPELLRFTDRSTRQFLLGPTHEEVITDLIRNEVKSYKQLPLNLFQIKTKFRDEVRPRYGVMRSREFIMKDAYSFHTSQQSLQATYDLMYYTYNTIFNRIGLDVRTVQADPGSIGGHLSHEFLALVSNYEDQMLLIDASHKATERNLPSENLQLVDAPGIYTLTELVKLFNLPIEKIAQIIIVHAQQNALYPLVALMVRGDHSINYAQVEKLPQVASPLVFATEDEIRLAIGVGSSSLGPINLPLPLIIDHSVAVMSDFVAGANIDGKYFFGINWERDLSLPEVANLTNQNISVSQPQRLHRTNWIEVGHIFQLGSKYSKVMKATVQGEDGNNMIMTMGCYGIGITRVVAAAIDKYNDKQGLLLPVSIAPFQVAIIPINLHKSLLVQTVAEQLYNQLSIRKIDVLLDDRKERPGVMFADIELIGIPHIIIIGDRNLAVQKIEYKNRSNGEKKLMNLSIIVDWIVAKLNS.

The protein belongs to the class-II aminoacyl-tRNA synthetase family. ProS type 1 subfamily. As to quaternary structure, homodimer.

Its subcellular location is the cytoplasm. The catalysed reaction is tRNA(Pro) + L-proline + ATP = L-prolyl-tRNA(Pro) + AMP + diphosphate. Its function is as follows. Catalyzes the attachment of proline to tRNA(Pro) in a two-step reaction: proline is first activated by ATP to form Pro-AMP and then transferred to the acceptor end of tRNA(Pro). As ProRS can inadvertently accommodate and process non-cognate amino acids such as alanine and cysteine, to avoid such errors it has two additional distinct editing activities against alanine. One activity is designated as 'pretransfer' editing and involves the tRNA(Pro)-independent hydrolysis of activated Ala-AMP. The other activity is designated 'posttransfer' editing and involves deacylation of mischarged Ala-tRNA(Pro). The misacylated Cys-tRNA(Pro) is not edited by ProRS. In Baumannia cicadellinicola subsp. Homalodisca coagulata, this protein is Proline--tRNA ligase.